The primary structure comprises 78 residues: Large ribosomal subunit protein bL28 (78 aa).

The protein belongs to the bacterial ribosomal protein bL28 family.

The chain is Large ribosomal subunit protein bL28 from Parasynechococcus marenigrum (strain WH8102).